The sequence spans 546 residues: Probable zinc metalloprotease EGY2, chloroplastic (546 aa).

The transit peptide at 1 to 64 directs the protein to the chloroplast; sequence MQLPAMSCSP…QIRNRRFVCQ (64 aa). The tract at residues 67-143 is disordered; sequence TETEPDGDGN…DATPASDAQE (77 aa). Residues 69-86 show a composition bias toward acidic residues; it reads TEPDGDGNGDEEKEELGD. Composition is skewed to polar residues over residues 89 to 110 and 118 to 130; these read SSPS…TNAD and NTEP…TVQN. The next 7 helical transmembrane spans lie at 257–277, 301–321, 326–346, 364–384, 427–447, 474–494, and 514–534; these read AVPE…TLLL, VYGA…HILA, GIKL…FGAI, AAGP…GFIL, PLVL…IPAG, LLGI…LIFF, and YISI…PYPF.

It belongs to the peptidase M50B family.

It is found in the plastid. Its subcellular location is the chloroplast membrane. Its function is as follows. Probable membrane-associated metalloprotease that may be involved in chloroplast development. In Oryza sativa subsp. japonica (Rice), this protein is Probable zinc metalloprotease EGY2, chloroplastic (EGY2).